A 70-amino-acid chain; its full sequence is Palustrin-2ISa (70 aa).

An N-terminal signal peptide occupies residues 1-22 (MFTLKKSLLLLFFLGTISLSLC). The propeptide at 23-39 (EQERSAEDEGEVIEEEV) is removed in mature form. The cysteines at positions 64 and 70 are disulfide-linked.

Expressed by the skin glands.

It localises to the secreted. Functionally, has antimicrobial activity against Gram-negative bacterium E.coli ATCC 8739 (MIC=100 ug), against Gram positive bacteria S.aureus ATCC 6538 (MIC=25 ug), methicillin-resistant S.aureus ATCC 43300 (MIC=100 ug), B.subtilis ATCC 6633 (MIC=12.5 ug) and against fungus C.albicans ATCC 90028 (MIC=100 ug). The polypeptide is Palustrin-2ISa (Odorrana ishikawae (Ishikawa's frog)).